Consider the following 901-residue polypeptide: HTH-type transcriptional regulator MalT (901 aa).

39 to 46 is an ATP binding site; the sequence is SPAGYGKT. Positions 829 to 894 constitute an HTH luxR-type domain; the sequence is ELIRTSPLTQ…DAVQHAQQLL (66 aa). Residues 853–872 constitute a DNA-binding region (H-T-H motif); the sequence is NEQIAGELEVAATTIKTHIR.

Belongs to the MalT family. Monomer in solution. Oligomerizes to an active state in the presence of the positive effectors ATP and maltotriose.

Activated by ATP and maltotriose, which are both required for DNA binding. In terms of biological role, positively regulates the transcription of the maltose regulon whose gene products are responsible for uptake and catabolism of malto-oligosaccharides. Specifically binds to the promoter region of its target genes, recognizing a short DNA motif called the MalT box. The chain is HTH-type transcriptional regulator MalT from Escherichia coli (strain K12 / MC4100 / BW2952).